Consider the following 451-residue polypeptide: L-seryl-tRNA(Sec) selenium transferase (451 aa).

N6-(pyridoxal phosphate)lysine is present on lysine 286.

Belongs to the SelA family. Requires pyridoxal 5'-phosphate as cofactor.

Its subcellular location is the cytoplasm. It carries out the reaction L-seryl-tRNA(Sec) + selenophosphate + H(+) = L-selenocysteinyl-tRNA(Sec) + phosphate. It participates in aminoacyl-tRNA biosynthesis; selenocysteinyl-tRNA(Sec) biosynthesis; selenocysteinyl-tRNA(Sec) from L-seryl-tRNA(Sec) (bacterial route): step 1/1. Converts seryl-tRNA(Sec) to selenocysteinyl-tRNA(Sec) required for selenoprotein biosynthesis. The chain is L-seryl-tRNA(Sec) selenium transferase from Aliarcobacter butzleri (strain RM4018) (Arcobacter butzleri).